A 397-amino-acid chain; its full sequence is Putative F-box protein At2g04810 (397 aa).

The 49-residue stretch at 20–68 (SDWSKLCPDVLRKIYETLRSPVDSHRAKIVCSNWYSVWKTCVKRPLCPL) folds into the F-box domain.

The sequence is that of Putative F-box protein At2g04810 from Arabidopsis thaliana (Mouse-ear cress).